The chain runs to 186 residues: MEEERRLRGRLSRRRPPAGGGPPNCRPWFLSEGSKSEPWAALLRSTVSGTADWTPNRQPLPPLPAFPSQESLPDPESTVPPEAFTVGSKTFSWTPLPPALRGSGSSRHLFCEPEGSLGSPTPSLKGCPALNSGRTPSAQECVPVQSPLALLSCPLCQKAFDPKLTQLDVDSHLAQCLAECTEDVVW.

2 disordered regions span residues 1–30 and 50–90; these read MEEE…PWFL and TADW…GSKT. A compositionally biased stretch (basic residues) spans 7-16; it reads LRGRLSRRRP. Ser-119 carries the post-translational modification Phosphoserine. A UBZ2-type zinc finger spans residues 150–186; sequence LLSCPLCQKAFDPKLTQLDVDSHLAQCLAECTEDVVW. Cys-153, Cys-156, His-172, and Cys-176 together coordinate Zn(2+).

In terms of assembly, component of the Fanconi anemia (FA) complex. Interacts with FANCA; interaction is direct. Interacts with REV1.

It is found in the nucleus. It localises to the chromosome. Functionally, component of the Fanconi anemia (FA) complex required to recruit the FA complex to DNA interstrand cross-links (ICLs) and promote ICLs repair. Following DNA damage recognizes and binds 'Lys-63'-linked ubiquitin generated by RNF8 at ICLs and recruits other components of the FA complex. Promotes translesion synthesis via interaction with REV1. The protein is Fanconi anemia core complex-associated protein 20 of Mus musculus (Mouse).